The following is a 764-amino-acid chain: Elongation factor G, mitochondrial (764 aa).

The transit peptide at 1–23 directs the protein to the mitochondrion; sequence MIRSLRAVSRLGARGFSSFAAAR. In terms of domain architecture, tr-type G spans 56–337; that stretch reads ARMRNIGISA…AICEYLPDPS (282 aa). Residues 65–72, 136–140, and 190–193 each bind GTP; these read AHIDSGKT, DTPGH, and NKMD.

It belongs to the TRAFAC class translation factor GTPase superfamily. Classic translation factor GTPase family. EF-G/EF-2 subfamily.

Its subcellular location is the mitochondrion. Its pathway is protein biosynthesis; polypeptide chain elongation. Mitochondrial GTPase that catalyzes the GTP-dependent ribosomal translocation step during translation elongation. During this step, the ribosome changes from the pre-translocational (PRE) to the post-translocational (POST) state as the newly formed A-site-bound peptidyl-tRNA and P-site-bound deacylated tRNA move to the P and E sites, respectively. Catalyzes the coordinated movement of the two tRNA molecules, the mRNA and conformational changes in the ribosome. This chain is Elongation factor G, mitochondrial, found in Yarrowia lipolytica (strain CLIB 122 / E 150) (Yeast).